A 732-amino-acid polypeptide reads, in one-letter code: E3 ubiquitin-protein ligase RNF19B (732 aa).

The interval 1–109 is disordered; the sequence is MGSEKDSESP…PEEDEAAEGG (109 aa). The tract at residues 1–315 is required for ubiquitin ligase activity and for protection against staurosporin-induced cell death; the sequence is MGSEKDSESP…VCGCEFCWLC (315 aa). Positions 54-71 are enriched in pro residues; that stretch reads AEPPPPAAPPPPPPPAPA. Residues 72–99 show a composition bias toward low complexity; it reads PVEAQAPPVEALPSEPAAEAEAEAVAAG. The segment covering 100–109 has biased composition (acidic residues); sequence PEEDEAAEGG. Positions 112–334 are TRIAD supradomain; it reads EEVECPLCLV…LSPSGCTFWG (223 aa). The Zn(2+) site is built by cysteine 116, cysteine 119, cysteine 139, cysteine 142, cysteine 203, cysteine 208, cysteine 225, cysteine 230, cysteine 235, cysteine 238, histidine 243, cysteine 248, cysteine 284, and cysteine 287. The RING-type 1 zinc finger occupies 116-165; that stretch reads CPLCLVRLPPERAPRLLSCPHRSCRDCLRHYLRLEISESRVPISCPECSE. Residues 183–248 form an IBR-type zinc finger; sequence HKYEEFMLRR…KQIWHPNQTC (66 aa). An RING-type 2; atypical zinc finger spans residues 284–315; sequence CPRCSAYIIKMNDGSCNHMTCAVCGCEFCWLC. Cysteine 299 is an active-site residue. Positions 304, 307, 312, 315, 323, and 330 each coordinate Zn(2+). Transmembrane regions (helical) follow at residues 351-371 and 412-432; these read LIGAPVGISLIAGIAIPAMVI and VIAAVSVGIGVPIMLAYVYGV. 2 disordered regions span residues 598–644 and 660–732; these read QLVS…QSCE and QPES…YEVE. A compositionally biased stretch (acidic residues) spans 674-683; it reads QSDDVPDITS.

Belongs to the RBR family. RNF19 subfamily. As to quaternary structure, interacts with UBE2L3, UBE2L6 and UCKL1. As to expression, expressed specifically in natural killer cells, activated macrophages and cytotoxic T-cells. Present in macrophages (at protein level). Ubiquitously expressed with high expression in testis.

Its subcellular location is the cytoplasmic granule membrane. The protein localises to the endoplasmic reticulum membrane. It carries out the reaction [E2 ubiquitin-conjugating enzyme]-S-ubiquitinyl-L-cysteine + [acceptor protein]-L-lysine = [E2 ubiquitin-conjugating enzyme]-L-cysteine + [acceptor protein]-N(6)-ubiquitinyl-L-lysine.. Its pathway is protein modification; protein ubiquitination. In terms of biological role, E3 ubiquitin-protein ligase which accepts ubiquitin from E2 ubiquitin-conjugating enzymes UBE2L3 and UBE2L6 in the form of a thioester and then directly transfers the ubiquitin to targeted substrates, such as UCKL1. Involved in the cytolytic activity of natural killer cells and cytotoxic T-cells. Protects against staurosporin-induced cell death. The protein is E3 ubiquitin-protein ligase RNF19B (Rnf19b) of Mus musculus (Mouse).